A 367-amino-acid polypeptide reads, in one-letter code: Cycloaraneosene synthase sdnA (367 aa).

The first 24 residues, 1–24 (MSLYGLFTLATSYLPSVGGGAALA), serve as a signal peptide directing secretion. Mg(2+)-binding residues include aspartate 115, asparagine 260, and serine 264. Positions 115–119 (DDQFD) match the DDXXD motif motif. An N-linked (GlcNAc...) asparagine glycan is attached at asparagine 276.

Belongs to the terpene synthase family. Mg(2+) serves as cofactor.

The enzyme catalyses (2E,6E,10E)-geranylgeranyl diphosphate = cycloaraneosene + diphosphate. It participates in antibiotic biosynthesis. Its function is as follows. Cycloaraneosene synthase; part of the gene cluster that mediates the biosynthesis of sordarin and hypoxysordarin, glycoside antibiotics with a unique tetracyclic diterpene aglycone structure. First, the geranylgeranyl diphosphate synthase sdnC constructs GGDP from farnesyl diphosphate and isopentenyl diphosphate. The diterpene cyclase sdnA then catalyzes the cyclization of GGDP to afford cycloaraneosene. Cycloaraneosene is then hydroxylated four times by the putative cytochrome P450 monooxygenases sdnB, sdnE, sdnF and sdnH to give a hydroxylated cycloaraneosene derivative such as cycloaraneosene-8,9,13,19-tetraol. Although the order of the hydroxylations is unclear, at least C8, C9 and C13 of the cycloaraneosene skeleton are hydroxylated before the sordaricin formation. Dehydration of the 13-hydroxy group of the hydroxylated cycloaraneosene derivative might be catalyzed by an unassigned hypothetical protein such as sdnG and sdnP to construct the cyclopentadiene moiety. The FAD-dependent oxidoreductase sdnN is proposed to catalyze the oxidation at C9 of the hydroxylated cycloaraneosene derivative and also catalyze the Baeyer-Villiger oxidation to give the lactone intermediate. The presumed lactone intermediate would be hydrolyzed to give an acrolein moiety and a carboxylate moiety. Then, [4+2]cycloaddition would occur between the acrolein moiety and the cyclopentadiene moiety to give sordaricin. SdnN might also be involved in the [4+2]cycloaddition after the hypothesized oxidation to accommodate the oxidized product and prompt the [4+2]cycloaddition. GDP-6-deoxy-D-altrose may be biosynthesized from GDP-D-mannose by the putative GDP-mannose-4,6-dehydratase sdnI and the short-chain dehydrogenase sdnK. The glycosyltransferase sdnJ catalyzes the attachment of 6-deoxy-D-altrose onto the 19-hydroxy group of sordaricin to give 4'-O-demethylsordarin. The methyltransferase sdnD would complete the biosynthesis of sordarin. Sordarin can be further modified into hypoxysordarin. The unique acyl chain at the 3'-hydroxy group of hypoxysordarin would be constructed by an iterative type I PKS sdnO and the trans-acting polyketide methyltransferase sdnL. SdnL would be responsible for the introduction of an alpha-methyl group of the polyketide chain. Alternatively, the beta-lactamase-like protein sdnR might be responsible for the cleavage and transfer of the polyketide chain from the PKS sdnO to sordarin. Two putative cytochrome P450 monooxygenases, sdnQ and sdnT, might catalyze the epoxidations of the polyketide chain to complete the biosynthesis of hypoxysordarin. Transcriptional regulators sdnM and sdnS are presumably encoded for the transcriptional regulation of the expression of the sdn gene cluster. This is Cycloaraneosene synthase sdnA from Sordaria araneosa (Pleurage araneosa).